Here is a 355-residue protein sequence, read N- to C-terminus: Serine acetyltransferase 4 (355 aa).

The protein belongs to the transferase hexapeptide repeat family. In terms of assembly, homomultimer. Localized in vascular tissues, particularly in phloem.

It is found in the cytoplasm. It catalyses the reaction L-serine + acetyl-CoA = O-acetyl-L-serine + CoA. Its pathway is amino-acid biosynthesis; L-cysteine biosynthesis; L-cysteine from L-serine: step 1/2. Its activity is regulated as follows. Feedback inhibitions by L-Ser and acetyl-CoA. This chain is Serine acetyltransferase 4, found in Arabidopsis thaliana (Mouse-ear cress).